Consider the following 221-residue polypeptide: Phosphoribosylformylglycinamidine synthase subunit PurQ (221 aa).

Residues 2–221 enclose the Glutamine amidotransferase type-1 domain; that stretch reads KTAVIQFPGS…VFESLKTVKK (220 aa). C87 serves as the catalytic Nucleophile. Catalysis depends on residues H195 and E197.

Part of the FGAM synthase complex composed of 1 PurL, 1 PurQ and 2 PurS subunits.

The protein localises to the cytoplasm. The catalysed reaction is N(2)-formyl-N(1)-(5-phospho-beta-D-ribosyl)glycinamide + L-glutamine + ATP + H2O = 2-formamido-N(1)-(5-O-phospho-beta-D-ribosyl)acetamidine + L-glutamate + ADP + phosphate + H(+). It carries out the reaction L-glutamine + H2O = L-glutamate + NH4(+). The protein operates within purine metabolism; IMP biosynthesis via de novo pathway; 5-amino-1-(5-phospho-D-ribosyl)imidazole from N(2)-formyl-N(1)-(5-phospho-D-ribosyl)glycinamide: step 1/2. Part of the phosphoribosylformylglycinamidine synthase complex involved in the purines biosynthetic pathway. Catalyzes the ATP-dependent conversion of formylglycinamide ribonucleotide (FGAR) and glutamine to yield formylglycinamidine ribonucleotide (FGAM) and glutamate. The FGAM synthase complex is composed of three subunits. PurQ produces an ammonia molecule by converting glutamine to glutamate. PurL transfers the ammonia molecule to FGAR to form FGAM in an ATP-dependent manner. PurS interacts with PurQ and PurL and is thought to assist in the transfer of the ammonia molecule from PurQ to PurL. This chain is Phosphoribosylformylglycinamidine synthase subunit PurQ, found in Deinococcus radiodurans (strain ATCC 13939 / DSM 20539 / JCM 16871 / CCUG 27074 / LMG 4051 / NBRC 15346 / NCIMB 9279 / VKM B-1422 / R1).